The following is a 129-amino-acid chain: Small ribosomal subunit protein uS8mz (129 aa).

It belongs to the universal ribosomal protein uS8 family. Component of the mitochondrial ribosome small subunit.

It is found in the mitochondrion. This Arabidopsis thaliana (Mouse-ear cress) protein is Small ribosomal subunit protein uS8mz (RPS15AB).